Consider the following 87-residue polypeptide: UPF0367 protein SynRCC307_0258 (87 aa).

It belongs to the UPF0367 family.

The chain is UPF0367 protein SynRCC307_0258 from Synechococcus sp. (strain RCC307).